The primary structure comprises 247 residues: Uridylate kinase (247 aa).

An ATP-binding site is contributed by Lys-18–Gly-21. Position 60 (Gly-60) interacts with UMP. 2 residues coordinate ATP: Gly-61 and Arg-65. UMP-binding positions include Asp-80 and Thr-141 to Thr-148. Residues Thr-168, Tyr-174, and Asp-177 each contribute to the ATP site.

Belongs to the UMP kinase family. In terms of assembly, homohexamer.

The protein resides in the cytoplasm. It catalyses the reaction UMP + ATP = UDP + ADP. The protein operates within pyrimidine metabolism; CTP biosynthesis via de novo pathway; UDP from UMP (UMPK route): step 1/1. With respect to regulation, inhibited by UTP. Catalyzes the reversible phosphorylation of UMP to UDP. The protein is Uridylate kinase of Stutzerimonas stutzeri (strain A1501) (Pseudomonas stutzeri).